The sequence spans 480 residues: Pyruvate kinase (480 aa).

Arg36 lines the substrate pocket. K(+) is bound by residues Asn38, Ser40, and Asp70. 38–41 (NFSH) is an ATP binding site. ATP contacts are provided by Arg77 and Lys160. A Mg(2+)-binding site is contributed by Glu225. Substrate contacts are provided by Gly251, Asp252, and Thr284. Asp252 serves as a coordination point for Mg(2+).

The protein belongs to the pyruvate kinase family. As to quaternary structure, homotetramer. Mg(2+) is required as a cofactor. Requires K(+) as cofactor.

The enzyme catalyses pyruvate + ATP = phosphoenolpyruvate + ADP + H(+). The protein operates within carbohydrate degradation; glycolysis; pyruvate from D-glyceraldehyde 3-phosphate: step 5/5. With respect to regulation, allosterically activated by AMP and by several sugar phosphates. Belongs to type II PK. This Buchnera aphidicola subsp. Acyrthosiphon pisum (strain APS) (Acyrthosiphon pisum symbiotic bacterium) protein is Pyruvate kinase (pykA).